Consider the following 494-residue polypeptide: MFNYSGLNEECGVFGIWNHPEAAQLTYMGLHSLQHRGQEGAGIVVSDQNELKGERGLGLLTEAINDDQMERLKGYQHAIGHVRYATSGNKGIENIQPFLYHFYDMSVGICHNGNLINAKSLRQNLEKQGAIFHSSSDTEVIMHLIRRSKAPTFEEALKESLRKVKGGFTFAILTKDALYGAVDPNAIRPLVVGKMKDGTYILASETCAIDVLGAEFVQDIHAGEYVVINDKGITVKSYTHHTTTAISAMEYIYFARPDSTIAGKNVHAVRKASGKKLAQESPVNADMVIGVPNSSLSAASGYAEEIGLPYEMGLVKNQYVARTFIQPTQELREQGVRVKLSAVKDIVDGKNIILVDDSIVRGTTIRRIVKMLKDSGANKVHVRIASPEFMFPSFYGIDVSTTAELISASKSPEEIKDYIGADSLAYLSVDGLIESIGLDYDAPYSGLCVESFTGDYPAGLYDYEANYKAHLSHRQKQYISKNKHFFDSEGNLNV.

Positions 1 to 10 (MFNYSGLNEE) are excised as a propeptide. Residue C11 is the Nucleophile of the active site. Residues 11–231 (CGVFGIWNHP…AGEYVVINDK (221 aa)) form the Glutamine amidotransferase type-2 domain. Residues S294, D356, and D357 each contribute to the Mg(2+) site.

This sequence in the C-terminal section; belongs to the purine/pyrimidine phosphoribosyltransferase family. Mg(2+) serves as cofactor.

The catalysed reaction is 5-phospho-beta-D-ribosylamine + L-glutamate + diphosphate = 5-phospho-alpha-D-ribose 1-diphosphate + L-glutamine + H2O. It functions in the pathway purine metabolism; IMP biosynthesis via de novo pathway; N(1)-(5-phospho-D-ribosyl)glycinamide from 5-phospho-alpha-D-ribose 1-diphosphate: step 1/2. Functionally, catalyzes the formation of phosphoribosylamine from phosphoribosylpyrophosphate (PRPP) and glutamine. The chain is Amidophosphoribosyltransferase from Staphylococcus aureus (strain Mu50 / ATCC 700699).